The primary structure comprises 152 residues: Cornifin-A (152 aa).

The tract at residues 20–40 (EVKQPCQPPPQEPCAPKTKEP) is disordered. 14 consecutive repeat copies span residues 27 to 34 (PPPQEPCA), 35 to 42 (PKTKEPCH), 43 to 49 (PIPEPCN), 50 to 57 (PKVPEPCQ), 58 to 65 (PKVPEPCQ), 66 to 73 (PKVPEPCQ), 74 to 81 (PKVPEPCQ), 82 to 89 (PKVPEPCQ), 90 to 97 (PKVPEPCQ), 98 to 105 (PKVPEPCH), 106 to 113 (PKAPEPCH), 114 to 121 (PVVPEPCQ), 122 to 129 (PVAPEPCQ), and 130 to 137 (PVVPEPCP). Residues 27–137 (PPPQEPCAPK…CQPVVPEPCP (111 aa)) are 14 X 8 AA approximate tandem repeats.

This sequence belongs to the cornifin (SPRR) family. In squamous epithelia lining the nasal vestibule and in the hard palate.

The protein resides in the cytoplasm. Its function is as follows. Cross-linked envelope protein of keratinocytes. It is a keratinocyte protein that first appears in the cell cytosol, but ultimately becomes cross-linked to membrane proteins by transglutaminase. All that results in the formation of an insoluble envelope beneath the plasma membrane. In Rattus norvegicus (Rat), this protein is Cornifin-A (Sprr1a).